The chain runs to 434 residues: Glutamate-1-semialdehyde 2,1-aminomutase 1 (434 aa).

N6-(pyridoxal phosphate)lysine is present on Lys-270.

The protein belongs to the class-III pyridoxal-phosphate-dependent aminotransferase family. HemL subfamily. In terms of assembly, homodimer. Requires pyridoxal 5'-phosphate as cofactor.

Its subcellular location is the cytoplasm. The catalysed reaction is (S)-4-amino-5-oxopentanoate = 5-aminolevulinate. The protein operates within porphyrin-containing compound metabolism; protoporphyrin-IX biosynthesis; 5-aminolevulinate from L-glutamyl-tRNA(Glu): step 2/2. The polypeptide is Glutamate-1-semialdehyde 2,1-aminomutase 1 (Bacillus anthracis (strain A0248)).